A 146-amino-acid polypeptide reads, in one-letter code: 3-hydroxyacyl-[acyl-carrier-protein] dehydratase FabZ (146 aa).

The active site involves H49.

It belongs to the thioester dehydratase family. FabZ subfamily.

The protein localises to the cytoplasm. The catalysed reaction is a (3R)-hydroxyacyl-[ACP] = a (2E)-enoyl-[ACP] + H2O. Involved in unsaturated fatty acids biosynthesis. Catalyzes the dehydration of short chain beta-hydroxyacyl-ACPs and long chain saturated and unsaturated beta-hydroxyacyl-ACPs. The polypeptide is 3-hydroxyacyl-[acyl-carrier-protein] dehydratase FabZ (Psychrobacter arcticus (strain DSM 17307 / VKM B-2377 / 273-4)).